Consider the following 520-residue polypeptide: GMP synthase [glutamine-hydrolyzing] (520 aa).

A Glutamine amidotransferase type-1 domain is found at 9–202 (TILIIDFGSQ…VHRIVGVKPG (194 aa)). The Nucleophile role is filled by Cys-86. Active-site residues include His-176 and Glu-178. The GMPS ATP-PPase domain occupies 203–395 (WTMGAYREQA…LGLPDSFIGR (193 aa)). 230 to 236 (SGGVDSS) contacts ATP.

Homodimer.

It catalyses the reaction XMP + L-glutamine + ATP + H2O = GMP + L-glutamate + AMP + diphosphate + 2 H(+). It participates in purine metabolism; GMP biosynthesis; GMP from XMP (L-Gln route): step 1/1. Functionally, catalyzes the synthesis of GMP from XMP. The protein is GMP synthase [glutamine-hydrolyzing] of Brucella abortus (strain S19).